A 259-amino-acid polypeptide reads, in one-letter code: Protein unc-50 homolog (259 aa).

M1 is modified (N-acetylmethionine). The span at M1 to L17 shows a compositional bias: polar residues. The segment at M1 to A22 is disordered. Topologically, residues M1–P82 are cytoplasmic. Position 6 is a phosphoserine (S6). A helical membrane pass occupies residues A83–L103. The Lumenal segment spans residues D104–L115. Residues W116–I136 form a helical membrane-spanning segment. Over S137 to A163 the chain is Cytoplasmic. Residues F164–L184 traverse the membrane as a helical segment. Residues T185–T187 are Lumenal-facing. The chain crosses the membrane as a helical span at residues F188–V208. At T209 to T222 the chain is on the cytoplasmic side. A helical transmembrane segment spans residues V223–G243. The Lumenal portion of the chain corresponds to W244 to K259.

This sequence belongs to the unc-50 family.

It localises to the nucleus inner membrane. The protein localises to the golgi apparatus membrane. Functionally, involved in the cell surface expression of neuronal nicotinic receptors. Binds RNA. This is Protein unc-50 homolog (UNC50) from Bos taurus (Bovine).